A 76-amino-acid chain; its full sequence is Small ribosomal subunit protein bS18 (76 aa).

This sequence belongs to the bacterial ribosomal protein bS18 family. Part of the 30S ribosomal subunit. Forms a tight heterodimer with protein bS6.

In terms of biological role, binds as a heterodimer with protein bS6 to the central domain of the 16S rRNA, where it helps stabilize the platform of the 30S subunit. In Oceanobacillus iheyensis (strain DSM 14371 / CIP 107618 / JCM 11309 / KCTC 3954 / HTE831), this protein is Small ribosomal subunit protein bS18.